Here is a 232-residue protein sequence, read N- to C-terminus: Dysfunctional anti-sigma-K factor RskA (232 aa).

Residues 1–90 (MTEHTDFELL…EVRRQSRWRT (90 aa)) lie on the Cytoplasmic side of the membrane. A helical membrane pass occupies residues 91–111 (AAFASAAAIAVGLGAFDLGVL). At 112-232 (TRPSPPPTVA…GTILAELPLG (121 aa)) the chain is on the extracellular side.

The protein belongs to the anti-sigma-K factor family.

It is found in the cell membrane. In terms of biological role, an anti-sigma factor for extracytoplasmic function (ECF) sigma factor SigK. ECF sigma factors are held in an inactive form by an anti-sigma factor until released by regulated intramembrane proteolysis (RIP). However, in M.bovis this protein is probably dysfunctional, due to at least 1 of the 2 naturally occurring polymorphisms in its gene, when compared to M.tuberculosis. This leads to an increased expression of SigK-regulated genes, such as mpb70 and mpb83. RIP occurs when an extracytoplasmic signal triggers a concerted proteolytic cascade to transmit information and elicit cellular responses. The membrane-spanning regulatory substrate protein is first cut extracytoplasmically (site-1 protease, S1P), then within the membrane itself (site-2 protease, S2P, Rip1), while cytoplasmic proteases finish degrading the regulatory protein, liberating the sigma factor. In Mycobacterium bovis (strain ATCC BAA-935 / AF2122/97), this protein is Dysfunctional anti-sigma-K factor RskA (rskA).